A 474-amino-acid polypeptide reads, in one-letter code: E3 ubiquitin-protein ligase RNF14 (474 aa).

The RWD domain maps to 11–137 (DELLALASIY…QFLKEETLAY (127 aa)). The D-box motif lies at 37 to 45 (RIYLDLPQN). The segment at 216–457 (KLFLCSICFC…DPGSPCFNRL (242 aa)) is TRIAD supradomain. Zn(2+) is bound by residues C220, C223, C238, H240, C243, C246, C265, C270, C309, C314, C329, C332, C337, C340, and H345. Residues 220 to 270 (CSICFCEKLGSECMYFLECRHVYCKACLKDYFEIQIRDGQVQCLNCPEPKC) form an RING-type 1 zinc finger. Residues 289–350 (ARYDRLLLQS…RLTYHGVSPC (62 aa)) form an IBR-type zinc finger. The residue at position 348 (S348) is a Phosphoserine. Zn(2+) is bound at residue C350. A coiled-coil region spans residues 351-395 (KVTAEKLMDLRNEYLQADEANKRLLDQRYGKRVIQKALEEMESKE). The interval 361 to 474 (RNEYLQADEA…DDIWEDEVED (114 aa)) is interaction with androgen receptor. Zn(2+) contacts are provided by C404 and C407. The RING-type 2; atypical zinc-finger motif lies at 404–433 (CPCCGTPIEKLDGCNKMTCTGCMQYFCWIC). C417 is an active-site residue. Residues C422, C425, C430, C433, H445, and C453 each contribute to the Zn(2+) site.

Belongs to the RBR family. RNF14 subfamily. In terms of assembly, interacts with GCN1; interaction takes place in response to ribosome collisions and is required for ubiquitination of EEF1A1/eEF1A. Interacts with the ubiquitin-conjugating enzymes UBE2E1 and UBE2E2. Interacts with AR/androgen receptor. Interacts with TCF7/TCF1, TCF7L1/TCF3 and TCF7L2/TCF4; promoting Wnt signaling. Post-translationally, RING-type zinc finger-dependent and UBE2E2-dependent autoubiquitination. Widely expressed.

The protein resides in the cytoplasm. The protein localises to the nucleus. It carries out the reaction [E2 ubiquitin-conjugating enzyme]-S-ubiquitinyl-L-cysteine + [acceptor protein]-L-lysine = [E2 ubiquitin-conjugating enzyme]-L-cysteine + [acceptor protein]-N(6)-ubiquitinyl-L-lysine.. The protein operates within protein modification; protein ubiquitination. In terms of biological role, E3 ubiquitin-protein ligase that plays a key role in the RNF14-RNF25 translation quality control pathway, a pathway that takes place when a ribosome has stalled during translation, and which promotes ubiquitination and degradation of translation factors on stalled ribosomes. Recruited to stalled ribosomes by the ribosome collision sensor GCN1 and mediates 'Lys-6'-linked ubiquitination of target proteins, leading to their degradation. Mediates ubiquitination of EEF1A1/eEF1A and ETF1/eRF1 translation factors on stalled ribosomes, leading to their degradation. Also catalyzes ubiquitination of ribosomal proteins RPL0, RPL1, RPL12, RPS13 and RPS17. Specifically required to resolve RNA-protein cross-links caused by reactive aldehydes, which trigger translation stress by stalling ribosomes: acts by catalying 'Lys-6'-linked ubiquitination of RNA-protein cross-links, leading to their removal by the ATP-dependent unfoldase VCP and subsequent degradation by the proteasome. Independently of its function in the response to stalled ribosomes, acts as a regulator of transcription in Wnt signaling via its interaction with TCF transcription factors (TCF7/TCF1, TCF7L1/TCF3 and TCF7L2/TCF4). May also play a role as a coactivator for androgen- and, to a lesser extent, progesterone-dependent transcription. The polypeptide is E3 ubiquitin-protein ligase RNF14 (Homo sapiens (Human)).